The sequence spans 303 residues: Ribonuclease P protein subunit p40 (303 aa).

As to quaternary structure, component of nuclear RNase P and RNase MRP ribonucleoproteins. RNase P consists of a catalytic RNA moiety and about 10 protein subunits; POP1, POP4, POP5, POP7, RPP14, RPP21, RPP25, RPP30, RPP38 and RPP40. Within the RNase P complex, POP1, POP7 and RPP25 form the 'finger' subcomplex, POP5, RPP14, RPP40 and homodimeric RPP30 form the 'palm' subcomplex, and RPP21, POP4 and RPP38 form the 'wrist' subcomplex. All subunits of the RNase P complex interact with the catalytic RNA. Several subunits of RNase P are also part of the RNase MRP complex. RNase MRP consists of a catalytic RNA moiety and about 8 protein subunits; POP1, POP7, RPP25, RPP30, RPP38, RPP40 and possibly also POP4 and POP5.

It localises to the nucleus. It is found in the nucleolus. Its function is as follows. Component of ribonuclease P, a ribonucleoprotein complex that generates mature tRNA molecules by cleaving their 5'-ends. Also a component of the MRP ribonuclease complex, which cleaves pre-rRNA sequences. The polypeptide is Ribonuclease P protein subunit p40 (RPP40) (Bos taurus (Bovine)).